An 85-amino-acid chain; its full sequence is UPF0291 protein SGO_0570 (85 aa).

Positions 56-85 (EDGNDVTPEKLRQVQREKGLHGRSLDDPNS) are disordered. The segment covering 62–85 (TPEKLRQVQREKGLHGRSLDDPNS) has biased composition (basic and acidic residues).

The protein belongs to the UPF0291 family.

Its subcellular location is the cytoplasm. This is UPF0291 protein SGO_0570 from Streptococcus gordonii (strain Challis / ATCC 35105 / BCRC 15272 / CH1 / DL1 / V288).